The sequence spans 176 residues: Large ribosomal subunit protein eL20 (176 aa).

Belongs to the eukaryotic ribosomal protein eL20 family. As to quaternary structure, component of the large ribosomal subunit.

Its subcellular location is the cytoplasm. Its function is as follows. Component of the large ribosomal subunit. The ribosome is a large ribonucleoprotein complex responsible for the synthesis of proteins in the cell. In Ictalurus punctatus (Channel catfish), this protein is Large ribosomal subunit protein eL20 (rpl18a).